The following is a 102-amino-acid chain: Small ribosomal subunit protein uS10 (102 aa).

It belongs to the universal ribosomal protein uS10 family. In terms of assembly, part of the 30S ribosomal subunit.

Functionally, involved in the binding of tRNA to the ribosomes. This chain is Small ribosomal subunit protein uS10, found in Limosilactobacillus reuteri (strain DSM 20016) (Lactobacillus reuteri).